We begin with the raw amino-acid sequence, 213 residues long: Histone H1.1 (213 aa).

The segment at 1–43 is disordered; sequence MSETAPVAQAASTATEKPAAAKKTKKPAKAAAPRKKPAGPSVS. The residue at position 2 (serine 2) is an N-acetylserine. A phosphoserine mark is found at serine 2 and serine 12. A compositionally biased stretch (low complexity) spans 8–18; sequence AQAASTATEKP. N6-acetyllysine is present on lysine 17. Over residues 20–37 the composition is skewed to basic residues; sequence AAKKTKKPAKAAAPRKKP. Lysine 36 carries the N6-(beta-hydroxybutyryl)lysine modification. An H15 domain is found at 38-111; sequence AGPSVSELIV…GAAGSFKLNK (74 aa). At serine 43 the chain carries Phosphoserine. N6-(beta-hydroxybutyryl)lysine is present on lysine 54. Arginine 56 is subject to Citrulline. Lysine 66 is modified (N6-(beta-hydroxybutyryl)lysine). A Phosphoserine modification is found at serine 67. Lysine 77 is subject to N6-acetyllysine. Lysine 87 is subject to N6-(beta-hydroxybutyryl)lysine. Position 92 is an N6-(beta-hydroxybutyryl)lysine; alternate (lysine 92). Residue lysine 92 is modified to N6-acetyllysine; alternate. A Phosphoserine modification is found at serine 106. Lysine 108 bears the N6-(beta-hydroxybutyryl)lysine mark. Positions 112-213 are disordered; the sequence is KAESKAITTK…KPKKAAPKKK (102 aa). Over residues 120–144 the composition is skewed to low complexity; it reads TKVSVKAKASGAAKKPKKTAGAAAK. Lysine 121 is modified (N6-acetyllysine). 2 stretches are compositionally biased toward basic residues: residues 145 to 178 and 185 to 213; these read KTVK…KKVA and KAVK…PKKK. Threonine 201 carries the phosphothreonine modification.

The protein belongs to the histone H1/H5 family. As to quaternary structure, interacts with DFFB. H1 histones are progressively phosphorylated during the cell cycle, becoming maximally phosphorylated during late G2 phase and M phase, and being dephosphorylated sharply thereafter. Post-translationally, citrullination at Arg-56 (H1R54ci) by PADI4 takes place within the DNA-binding site of H1 and results in its displacement from chromatin and global chromatin decondensation, thereby promoting pluripotency and stem cell maintenance. In terms of processing, hydroxybutyrylation of histones is induced by starvation. In terms of tissue distribution, restricted to thymus, testis and spleen. Present also in lymphocytic and neuronal cells. Increases in testis starting with a low level at day 5 and reaching high concentrations in 20-day old and adult animals.

The protein localises to the nucleus. It localises to the chromosome. In terms of biological role, histone H1 protein binds to linker DNA between nucleosomes forming the macromolecular structure known as the chromatin fiber. Histones H1 are necessary for the condensation of nucleosome chains into higher-order structured fibers. Also acts as a regulator of individual gene transcription through chromatin remodeling, nucleosome spacing and DNA methylation. The sequence is that of Histone H1.1 from Mus musculus (Mouse).